The following is a 95-amino-acid chain: Small ribosomal subunit protein bS6 (95 aa).

The protein belongs to the bacterial ribosomal protein bS6 family.

Functionally, binds together with bS18 to 16S ribosomal RNA. This chain is Small ribosomal subunit protein bS6, found in Bacillus pumilus (strain SAFR-032).